We begin with the raw amino-acid sequence, 415 residues long: Gamma-glutamyl phosphate reductase (415 aa).

This sequence belongs to the gamma-glutamyl phosphate reductase family.

It localises to the cytoplasm. It catalyses the reaction L-glutamate 5-semialdehyde + phosphate + NADP(+) = L-glutamyl 5-phosphate + NADPH + H(+). It functions in the pathway amino-acid biosynthesis; L-proline biosynthesis; L-glutamate 5-semialdehyde from L-glutamate: step 2/2. In terms of biological role, catalyzes the NADPH-dependent reduction of L-glutamate 5-phosphate into L-glutamate 5-semialdehyde and phosphate. The product spontaneously undergoes cyclization to form 1-pyrroline-5-carboxylate. In Bacteroides fragilis (strain YCH46), this protein is Gamma-glutamyl phosphate reductase.